Here is a 419-residue protein sequence, read N- to C-terminus: MQNSHLSQQRFSDLALHRSVQQAIKEKGFEFCTPIQALSLPITLKGQDIAGQAQTGTGKTIAFLTATFHHLLQKNNINSSEQPRALILAPTRELVVQIANDANFLVQATGLKTGLAYGGEGYDKQLKVIDQGIDILIGTTGRVIDYVKQGIIRLDYIQVVVLDEADRMFDLGFIRDIRYLLRKCPVPQQRLTMLFSATLSYKVRELAFEHMNDPQYVEIEPLQKTGHRIREELFYPSNQDKMALLMTLLEEEWPERCIIFSNTKHRCEEIWGYLSADGHRVGLLTGDVMQKKRLSLLKQFTDGTLDILVATDVAARGLHIPDVTHVFNYDLPDDCEDYVHRIGRTGRAGESGISISFACEEYAINLPAIEEYIGHSIPVSQYDAKALIEDLPTPHRIKRGAFDSRSNLQRTIKRLKKTY.

Residues 9 to 37 (QRFSDLALHRSVQQAIKEKGFEFCTPIQA) carry the Q motif motif. The Helicase ATP-binding domain occupies 40 to 217 (LPITLKGQDI…FEHMNDPQYV (178 aa)). An ATP-binding site is contributed by 53-60 (AQTGTGKT). A DEAD box motif is present at residues 163 to 166 (DEAD). The Helicase C-terminal domain occupies 241-388 (KMALLMTLLE…VSQYDAKALI (148 aa)).

The protein belongs to the DEAD box helicase family. RhlB subfamily. As to quaternary structure, component of the RNA degradosome, which is a multiprotein complex involved in RNA processing and mRNA degradation.

Its subcellular location is the cytoplasm. It catalyses the reaction ATP + H2O = ADP + phosphate + H(+). In terms of biological role, DEAD-box RNA helicase involved in RNA degradation. Has RNA-dependent ATPase activity and unwinds double-stranded RNA. The polypeptide is ATP-dependent RNA helicase RhlB (Histophilus somni (strain 129Pt) (Haemophilus somnus)).